The sequence spans 324 residues: Nidogen-1 (324 aa).

Residues 16-178 (PFLADLDTTD…GVWVFEIGSP (163 aa)) enclose the NIDO domain. Asn97 is a glycosylation site (N-linked (GlcNAc...) asparagine). A sulfotyrosine mark is found at Tyr200 and Tyr205. A disordered region spans residues 219 to 259 (TQPFPSHSPRRGYPDPHNVPRTLAPSYEATERPHGIPTERT). A compositionally biased stretch (basic and acidic residues) spans 247–259 (ATERPHGIPTERT). Residues 295-324 (SQQTCANNRHQCSVHAECRDYATGFCCRCV) form the EGF-like domain. Disulfide bonds link Cys299–Cys312 and Cys306–Cys321.

In terms of assembly, interacts with FBLN1. Interacts with LGALS3BP. Interacts with PLXDC1. Interacts with SVEP1. N- and O-glycosylated.

The protein localises to the secreted. It is found in the extracellular space. Its subcellular location is the extracellular matrix. The protein resides in the basement membrane. Its function is as follows. Sulfated glycoprotein widely distributed in basement membranes and tightly associated with laminin. Also binds to collagen IV and perlecan. It probably has a role in cell-extracellular matrix interactions. In Rattus norvegicus (Rat), this protein is Nidogen-1 (Nid1).